We begin with the raw amino-acid sequence, 227 residues long: 7-cyano-7-deazaguanine synthase (227 aa).

Position 7–17 (7–17) interacts with ATP; sequence LSGGLDSSTIL. Zn(2+)-binding residues include C191, C199, C202, and C205.

Belongs to the QueC family. The cofactor is Zn(2+).

The enzyme catalyses 7-carboxy-7-deazaguanine + NH4(+) + ATP = 7-cyano-7-deazaguanine + ADP + phosphate + H2O + H(+). The protein operates within purine metabolism; 7-cyano-7-deazaguanine biosynthesis. Its function is as follows. Catalyzes the ATP-dependent conversion of 7-carboxy-7-deazaguanine (CDG) to 7-cyano-7-deazaguanine (preQ(0)). The sequence is that of 7-cyano-7-deazaguanine synthase from Trichormus variabilis (strain ATCC 29413 / PCC 7937) (Anabaena variabilis).